The chain runs to 229 residues: PKHD-type hydroxylase Nham_1514 (229 aa).

Positions 78–180 (QIFPPLFNRY…RVASFFWLQS (103 aa)) constitute a Fe2OG dioxygenase domain. The Fe cation site is built by histidine 98, aspartate 100, and histidine 161. Arginine 171 is a binding site for 2-oxoglutarate.

Fe(2+) serves as cofactor. The cofactor is L-ascorbate.

In Nitrobacter hamburgensis (strain DSM 10229 / NCIMB 13809 / X14), this protein is PKHD-type hydroxylase Nham_1514.